The sequence spans 283 residues: Eukaryotic translation initiation factor 3 subunit K (283 aa).

The PCI domain maps to 52-263 (YDLLANLAIL…EIKATVIREE (212 aa)). The segment at 114–135 (EATTTDADNAGSLSGDDDDDEV) is disordered.

It belongs to the eIF-3 subunit K family. In terms of assembly, component of the eukaryotic translation initiation factor 3 (eIF-3) complex.

It localises to the cytoplasm. In terms of biological role, component of the eukaryotic translation initiation factor 3 (eIF-3) complex, which is involved in protein synthesis of a specialized repertoire of mRNAs and, together with other initiation factors, stimulates binding of mRNA and methionyl-tRNAi to the 40S ribosome. The eIF-3 complex specifically targets and initiates translation of a subset of mRNAs involved in cell proliferation. The protein is Eukaryotic translation initiation factor 3 subunit K of Mycosarcoma maydis (Corn smut fungus).